Consider the following 333-residue polypeptide: METSLYLPIVLIVGGIIFLILFFHYVPFFLWLSAKVSGVNISLIQLFLMRIRNVPPYIIVPGMIEAHKAGLKNITRDELEAHYLAGGHVEKVVHALVSASKANIELSFQMATAIDLAGRDVFEAVQMSVNPKVIDTPPVTAVAKDGIQLIAKARVTVRASIKQLVGGAGEDTILARVGEGIVSSIGSSENHKSVLENPDSISKLVLRKGLDAGTAFEILSIDIADIDIGKNIGAALQIDQANADKNIAQAKAEERRAMAVASEQEMKAKAQEARAKVIEAEAEVPKAMAEAFRSGNLGIMDYYRMKNIEADTSMRENIAKPTTGGTTNQPLSK.

Residues 9–29 (IVLIVGGIIFLILFFHYVPFF) form a helical membrane-spanning segment.

It belongs to the flotillin-like FloA family. In terms of assembly, homooligomerizes.

Its subcellular location is the cell membrane. It is found in the membrane raft. In terms of biological role, found in functional membrane microdomains (FMM) that may be equivalent to eukaryotic membrane rafts. FMMs are highly dynamic and increase in number as cells age. Flotillins are thought to be important factors in membrane fluidity. The polypeptide is Flotillin-like protein FloA (Bacteroides thetaiotaomicron (strain ATCC 29148 / DSM 2079 / JCM 5827 / CCUG 10774 / NCTC 10582 / VPI-5482 / E50)).